We begin with the raw amino-acid sequence, 486 residues long: Protein nucleotidyltransferase YdiU (486 aa).

Residues G90, G92, R93, K113, D125, G126, R176, and R183 each contribute to the ATP site. D252 functions as the Proton acceptor in the catalytic mechanism. The Mg(2+) site is built by N253 and D262. Position 262 (D262) interacts with ATP.

It belongs to the SELO family. Requires Mg(2+) as cofactor. The cofactor is Mn(2+).

It catalyses the reaction L-seryl-[protein] + ATP = 3-O-(5'-adenylyl)-L-seryl-[protein] + diphosphate. The enzyme catalyses L-threonyl-[protein] + ATP = 3-O-(5'-adenylyl)-L-threonyl-[protein] + diphosphate. The catalysed reaction is L-tyrosyl-[protein] + ATP = O-(5'-adenylyl)-L-tyrosyl-[protein] + diphosphate. It carries out the reaction L-histidyl-[protein] + UTP = N(tele)-(5'-uridylyl)-L-histidyl-[protein] + diphosphate. It catalyses the reaction L-seryl-[protein] + UTP = O-(5'-uridylyl)-L-seryl-[protein] + diphosphate. The enzyme catalyses L-tyrosyl-[protein] + UTP = O-(5'-uridylyl)-L-tyrosyl-[protein] + diphosphate. Functionally, nucleotidyltransferase involved in the post-translational modification of proteins. It can catalyze the addition of adenosine monophosphate (AMP) or uridine monophosphate (UMP) to a protein, resulting in modifications known as AMPylation and UMPylation. The protein is Protein nucleotidyltransferase YdiU of Pseudomonas paraeruginosa (strain DSM 24068 / PA7) (Pseudomonas aeruginosa (strain PA7)).